Here is a 117-residue protein sequence, read N- to C-terminus: Large ribosomal subunit protein bL19 (117 aa).

It belongs to the bacterial ribosomal protein bL19 family.

Functionally, this protein is located at the 30S-50S ribosomal subunit interface and may play a role in the structure and function of the aminoacyl-tRNA binding site. In Paenarthrobacter aurescens (strain TC1), this protein is Large ribosomal subunit protein bL19.